A 729-amino-acid chain; its full sequence is MDDLTLLDLLECPVCFEKLDVTAKVLPCQHTFCKPCLQRVFKAHKELRCPECRTPVFSNIEALPANLLLVRLLDGVRSGQSSGRGGSFRRPGTMTLQDGRKSRTNPRRLQASPFRLVPNVRIHMDGVPRAKALCNYRGQNPGDLRFNKGDIILLRRQLDENWYQGEINGISGNFPASSVEVIKQLPQPPPLCRALYNFDLRGKDKSENQDCLTFLKDDIITVISRVDENWAEGKLGDKVGIFPILFVEPNLTARHLLEKNKGRQSSRTKNLSLVSSSSRGNTSTLRRGPGSRRKVPGQFSITTALNTLNRMVHSPSGRHMVEISTPVLISSSNPSVITQPMEKADVPSSCVGQVSTYHPAPVSPGHSTAVVSLPGSQQHLSANMFVALHSYSAHGPDELDLQKGEGVRVLGKCQDGWLRGVSLVTGRVGIFPNNYVIPIFRKTSSFPDSRSPGLYTTWTLSTSSVSSQGSISEGDPRQSRPFKSVFVPTAIVNPVRSTAGPGTLGQGSLRKGRSSMRKNGSLQRPLQSGIPTLVVGSLRRSPTMVLRPQQFQFYQPQGIPSSPSAVVVEMGSKPALTGEPALTCISRGSEAWIHSAASSLIMEDKEIPIKSEPLPKPPASAPPSILVKPENSRNGIEKQVKTVRFQNYSPPPTKHYTSHPTSGKPEQPATLKASQPEAASLGPEMTVLFAHRSGCHSGQQTDLRRKSALGKATTLVSTASGTQTVFPSK.

The RING-type zinc-finger motif lies at 12 to 53 (CPVCFEKLDVTAKVLPCQHTFCKPCLQRVFKAHKELRCPECR). The disordered stretch occupies residues 78 to 105 (SGQSSGRGGSFRRPGTMTLQDGRKSRTN). SH3 domains follow at residues 125–184 (DGVP…VIKQ) and 187–252 (QPPP…PNLT). Positions 258-297 (EKNKGRQSSRTKNLSLVSSSSRGNTSTLRRGPGSRRKVPG) are disordered. Residues 263 to 285 (RQSSRTKNLSLVSSSSRGNTSTL) are compositionally biased toward polar residues. The segment at 370-459 (VVSLPGSQQH…RSPGLYTTWT (90 aa)) is interaction with PAK4. Residues 380-441 (LSANMFVALH…PNNYVIPIFR (62 aa)) form the SH3 3 domain. 2 disordered regions span residues 497 to 526 (STAG…QRPL) and 610 to 677 (KSEP…SQPE). A compositionally biased stretch (polar residues) spans 517–526 (RKNGSLQRPL). An interaction with PPP1CA region spans residues 641 to 646 (KTVRFQ). Ser-649 carries the post-translational modification Phosphoserine.

This sequence belongs to the SH3RF family. As to quaternary structure, interacts with FASLG and PPP1CA. Interacts with PAK4 and TNFRSF1A. Interacts with DLK1, MAP3K10/MLK2, MAPK8IP1/JIP1, MAPK8IP2/JIP2 and MAPK8IP3/JIP3. Interacts with RAC1 (both active GTP- or inactive GDP-bound forms). Post-translationally, autoubiquitinated. Heart (at protein level). Up-regulated in colon cancer tissues as compared to normal colon tissues (at protein level). Testis. In the heart, present in the apex, left atrium, right atrium, left ventricle and right ventricle, but not in the aorta.

It is found in the nucleus. It carries out the reaction S-ubiquitinyl-[E2 ubiquitin-conjugating enzyme]-L-cysteine + [acceptor protein]-L-lysine = [E2 ubiquitin-conjugating enzyme]-L-cysteine + N(6)-ubiquitinyl-[acceptor protein]-L-lysine.. It functions in the pathway protein modification; protein ubiquitination. Has E3 ubiquitin-protein ligase activity. Acts as an anti-apoptotic regulator of the JNK pathway by ubiquitinating and promoting the degradation of SH3RF1, a scaffold protein that is required for pro-apoptotic JNK activation. Facilitates TNF-alpha-mediated recruitment of adapter proteins TRADD and RIPK1 to TNFRSF1A and regulates PAK4 protein stability via inhibition of its ubiquitin-mediated proteasomal degradation. Inhibits PPP1CA phosphatase activity. This is E3 ubiquitin-protein ligase SH3RF2 (SH3RF2) from Homo sapiens (Human).